A 505-amino-acid polypeptide reads, in one-letter code: Phase 1 flagellin (505 aa).

This sequence belongs to the bacterial flagellin family.

Its subcellular location is the secreted. The protein resides in the bacterial flagellum. Its function is as follows. Flagellin is the subunit protein which polymerizes to form the filaments of bacterial flagella. The chain is Phase 1 flagellin (fliC) from Salmonella naestved.